The sequence spans 85 residues: Oxytocin-neurophysin 1 (85 aa).

G3 is subject to Glycine amide. 6 disulfide bridges follow: C16-C60, C19-C33, C27-C50, C34-C40, C67-C79, and C80-C85.

This sequence belongs to the vasopressin/oxytocin family. Interacts with oxytocin receptor (Ki=1.5 nM). Interacts with vasopressin V1aR/AVPR1A (Ki=37 nM), V1bR/AVPR1B (Ki=222 nM), and V2R/AVPR2 receptors (Ki=823 nM).

Functionally, neurophysin 1 specifically binds oxytocin. In terms of biological role, oxytocin causes contraction of the smooth muscle of the uterus and of the mammary gland. Acts by binding to oxytocin receptor (OXTR). The protein is Oxytocin-neurophysin 1 (OXT) of Papio hamadryas (Hamadryas baboon).